The sequence spans 356 residues: GTPase Obg (356 aa).

The 159-residue stretch at 2–160 (ESFVDEVAIE…KFLRLSLKLL (159 aa)) folds into the Obg domain. In terms of domain architecture, OBG-type G spans 161 to 329 (ADVGIVGLPN…LLENMDEVFF (169 aa)). GTP-binding positions include 167–174 (GLPNAGKS), 192–196 (FTTLS), 215–218 (DIPG), 282–285 (NKID), and 310–312 (SAD). Positions 174 and 194 each coordinate Mg(2+).

The protein belongs to the TRAFAC class OBG-HflX-like GTPase superfamily. OBG GTPase family. As to quaternary structure, monomer. It depends on Mg(2+) as a cofactor.

It is found in the cytoplasm. Functionally, an essential GTPase which binds GTP, GDP and possibly (p)ppGpp with moderate affinity, with high nucleotide exchange rates and a fairly low GTP hydrolysis rate. Plays a role in control of the cell cycle, stress response, ribosome biogenesis and in those bacteria that undergo differentiation, in morphogenesis control. This chain is GTPase Obg, found in Leptospira interrogans serogroup Icterohaemorrhagiae serovar copenhageni (strain Fiocruz L1-130).